Reading from the N-terminus, the 1293-residue chain is Enterobactin synthase component F (1293 aa).

The elongation/condensation stretch occupies residues 1–301 (MSQHLPLVAA…NVLPLGIHIA (301 aa)). Positions 482 to 887 (SYREMREQVV…ALPDVEQAVT (406 aa)) are adenylation. In terms of domain architecture, Carrier spans 971–1046 (APKAGSETII…KLATIIDGEE (76 aa)). S1006 bears the O-(pantetheine 4'-phosphoryl)serine mark. A thioesterase region spans residues 1066–1293 (PTLFCFHPAS…GPIIRATLNR (228 aa)). H1271 (proton acceptor; for thioesterase activity) is an active-site residue.

Belongs to the ATP-dependent AMP-binding enzyme family. EntF subfamily. In terms of assembly, proteins EntB, EntD, EntE and EntF are the component of the enterobactin synthase. Components probably do not form a stable complex. EntF acts as a catalytic monomer. Pantetheine 4'-phosphate is required as a cofactor. In terms of processing, 4'-phosphopantetheine is transferred from CoA to a specific serine of apo-EntF by EntD. Holo-EntF so formed is then acylated with seryl-AMP.

The protein localises to the cytoplasm. The catalysed reaction is 3 2,3-dihydroxybenzoate + 3 L-serine + 6 ATP = enterobactin + 6 AMP + 6 diphosphate + 4 H(+). It carries out the reaction holo-[peptidyl-carrier protein] + L-serine + ATP = L-seryl-[peptidyl-carrier protein] + AMP + diphosphate. It functions in the pathway siderophore biosynthesis; enterobactin biosynthesis. In terms of biological role, involved in the biosynthesis of the siderophore enterobactin (enterochelin), which is a macrocyclic trimeric lactone of N-(2,3-dihydroxybenzoyl)-serine. EntF catalyzes the activation of L-serine via ATP-dependent PPi exchange reaction to form seryladenylate. Activated L-serine is loaded onto the peptidyl carrier domain via a thioester linkage to the phosphopanthetheine moiety, forming seryl-S-Ppant-EntF. EntF acts then as the sole catalyst for the formation of the three amide and three ester linkages found in enterobactin, using seryladenylate and 2,3-dihydroxybenzoate-S-Ppant-EntB (DHB-S-Ppant-EntB) as substrates, via the formation of a DHB-Ser-S-Ppant-EntF intermediate. The sequence is that of Enterobactin synthase component F (entF) from Escherichia coli O157:H7.